The sequence spans 1025 residues: Leucyl-cystinyl aminopeptidase (1025 aa).

Methionine 1 carries the N-acetylmethionine modification. Topologically, residues 1–109 are cytoplasmic; sequence METFTNDRLQ…DGTCSVPSAR (109 aa). The Dileucine internalization motif signature appears at 53–54; the sequence is LL. Phosphotyrosine is present on tyrosine 70. Positions 76–77 match the Dileucine internalization motif motif; it reads LL. 2 positions are modified to phosphoserine; by PKC/PRKCZ; in vitro: serine 80 and serine 91. Residues 96-101 form a tankyrase binding region; it reads RQSPDG. Residues 110–131 traverse the membrane as a helical; Signal-anchor for type II membrane protein segment; the sequence is TLVICVFVIVVAVSVIMVIYLL. Residues 132-1025 lie on the Extracellular side of the membrane; the sequence is PRCTFTKEGC…RNLKTLTLWL (894 aa). Residues asparagine 145, asparagine 184, asparagine 215, asparagine 256, and asparagine 266 are each glycosylated (N-linked (GlcNAc...) asparagine). Glutamate 295 serves as a coordination point for substrate. 2 N-linked (GlcNAc...) asparagine glycosylation sites follow: asparagine 368 and asparagine 374. 428–432 serves as a coordination point for substrate; that stretch reads GAMEN. Asparagine 447 is a glycosylation site (N-linked (GlcNAc...) asparagine). Position 464 (histidine 464) interacts with Zn(2+). The Proton acceptor role is filled by glutamate 465. Zn(2+) is bound by residues histidine 468 and glutamate 487. 9 N-linked (GlcNAc...) asparagine glycosylation sites follow: asparagine 525, asparagine 578, asparagine 664, asparagine 682, asparagine 695, asparagine 758, asparagine 834, asparagine 850, and asparagine 989.

This sequence belongs to the peptidase M1 family. Homodimer. Binds tankyrases 1 and 2. The cofactor is Zn(2+). In terms of processing, N-glycosylated. Highly expressed in heart, brain, spleen, lung, kidney and white adipose tissue. Detected at lower levels in skeletal muscle and liver.

It localises to the cell membrane. The protein localises to the endomembrane system. It catalyses the reaction Release of an N-terminal amino acid, Cys-|-Xaa-, in which the half-cystine residue is involved in a disulfide loop, notably in oxytocin or vasopressin. Hydrolysis rates on a range of aminoacyl arylamides exceed that for the cystinyl derivative, however.. Functionally, release of an N-terminal amino acid, cleave before cysteine, leucine as well as other amino acids. Degrades peptide hormones such as oxytocin, vasopressin and angiotensin III, and plays a role in maintaining homeostasis during pregnancy. May be involved in the inactivation of neuronal peptides in the brain. Cleaves Met-enkephalin and dynorphin. Binds angiotensin IV and may be the angiotensin IV receptor in the brain. This chain is Leucyl-cystinyl aminopeptidase (Lnpep), found in Rattus norvegicus (Rat).